The chain runs to 198 residues: Proteasome subunit beta 1 (198 aa).

Positions 1 to 8 are cleaved as a propeptide — removed in mature form; by autocatalysis; that stretch reads MSMYMPGA. Thr9 functions as the Nucleophile in the catalytic mechanism.

Belongs to the peptidase T1B family. As to quaternary structure, the 20S proteasome core is composed of 14 alpha and 14 beta subunits that assemble into four stacked heptameric rings, resulting in a barrel-shaped structure. The two inner rings, each composed of seven catalytic beta subunits, are sandwiched by two outer rings, each composed of seven alpha subunits. The catalytic chamber with the active sites is on the inside of the barrel. Has a gated structure, the ends of the cylinder being occluded by the N-termini of the alpha-subunits. Is capped at one or both ends by the proteasome regulatory ATPase, PAN.

It is found in the cytoplasm. It carries out the reaction Cleavage of peptide bonds with very broad specificity.. The formation of the proteasomal ATPase PAN-20S proteasome complex, via the docking of the C-termini of PAN into the intersubunit pockets in the alpha-rings, triggers opening of the gate for substrate entry. Interconversion between the open-gate and close-gate conformations leads to a dynamic regulation of the 20S proteasome proteolysis activity. Its function is as follows. Component of the proteasome core, a large protease complex with broad specificity involved in protein degradation. The polypeptide is Proteasome subunit beta 1 (Nitrosopumilus maritimus (strain SCM1)).